We begin with the raw amino-acid sequence, 392 residues long: DNA replication and repair protein RecF (392 aa).

An ATP-binding site is contributed by 30 to 37 (GPNAAGKT).

This sequence belongs to the RecF family.

The protein resides in the cytoplasm. The RecF protein is involved in DNA metabolism; it is required for DNA replication and normal SOS inducibility. RecF binds preferentially to single-stranded, linear DNA. It also seems to bind ATP. The protein is DNA replication and repair protein RecF of Chloroflexus aggregans (strain MD-66 / DSM 9485).